Consider the following 103-residue polypeptide: Small ribosomal subunit protein uS10 (103 aa).

It belongs to the universal ribosomal protein uS10 family. Part of the 30S ribosomal subunit.

In terms of biological role, involved in the binding of tRNA to the ribosomes. The sequence is that of Small ribosomal subunit protein uS10 from Acinetobacter baumannii (strain AB307-0294).